Here is a 283-residue protein sequence, read N- to C-terminus: Orotidine 5'-phosphate decarboxylase (283 aa).

Catalysis depends on lysine 97, which acts as the Proton donor.

This sequence belongs to the OMP decarboxylase family. Type 2 subfamily.

It catalyses the reaction orotidine 5'-phosphate + H(+) = UMP + CO2. It functions in the pathway pyrimidine metabolism; UMP biosynthesis via de novo pathway; UMP from orotate: step 2/2. This is Orotidine 5'-phosphate decarboxylase from Clostridium botulinum (strain Loch Maree / Type A3).